We begin with the raw amino-acid sequence, 445 residues long: Methylphloroacetophenone oxidase (445 aa).

Residues Val25–Val45 traverse the membrane as a helical segment. The N-linked (GlcNAc...) asparagine glycan is linked to Asn51.

It belongs to the cytochrome P450 family.

The protein resides in the membrane. It functions in the pathway secondary metabolite biosynthesis. In terms of biological role, methylphloroacetophenone oxidase; part of the gene cluster that mediates the biosynthesis of usnic acid, a dibenzofuran lichen product possessing a broad spectrum of biological activities. Two genes, mpas and mpao, comprise the usnic acid biosynthetic gene cluster with a single post-PKS enzyme, the methylphloracetophenone oxidase (mpao). The methylphloroacetophenone synthase (mpas) is a non-reducing polyketide synthase that produces methylphloracetophenone from acetate via a methylated tetraketide intermediate. The methylphloroacetophenone oxidase then carries out the oxidative dimerization of methylphloracetophenone to usnic acid. The polypeptide is Methylphloroacetophenone oxidase (Cladonia uncialis (Cup lichen)).